Reading from the N-terminus, the 991-residue chain is Translation initiation factor IF-2 (991 aa).

2 disordered regions span residues 58–82 (EGKK…GRSR) and 106–405 (QARA…PAPQ). Over residues 106–164 (QARADAAASDAAPAEPAPAAAEPSASAPVTAPVNAPAADAPQAPATAAPDTAAPAAETP) the composition is skewed to low complexity. Positions 165–175 (SQPPAVEPQPA) are enriched in pro residues. 3 stretches are compositionally biased toward low complexity: residues 190–206 (AKPA…AAVE), 221–258 (AVQA…ASKP), and 267–276 (APVPVAAPAV). Over residues 279–289 (AGREEARRAAE) the composition is skewed to basic and acidic residues. The span at 379-388 (RAGGKGGKGG) shows a compositional bias: gly residues. Residues 395–405 (QAERRHEPAPQ) show a composition bias toward basic and acidic residues. A tr-type G domain is found at 492-659 (PRAPVVTVMG…NVLLQAEILE (168 aa)). The G1 stretch occupies residues 501 to 508 (GHVDHGKT). 501–508 (GHVDHGKT) contacts GTP. The tract at residues 526–530 (GITQH) is G2. A G3 region spans residues 547–550 (DTPG). GTP-binding positions include 547 to 551 (DTPGH) and 601 to 604 (NKID). Positions 601-604 (NKID) are G4. Residues 637 to 639 (SAK) form a G5 region.

Belongs to the TRAFAC class translation factor GTPase superfamily. Classic translation factor GTPase family. IF-2 subfamily.

The protein localises to the cytoplasm. In terms of biological role, one of the essential components for the initiation of protein synthesis. Protects formylmethionyl-tRNA from spontaneous hydrolysis and promotes its binding to the 30S ribosomal subunits. Also involved in the hydrolysis of GTP during the formation of the 70S ribosomal complex. The sequence is that of Translation initiation factor IF-2 from Bordetella petrii (strain ATCC BAA-461 / DSM 12804 / CCUG 43448).